Here is a 273-residue protein sequence, read N- to C-terminus: Undecaprenyl-diphosphatase (273 aa).

8 consecutive transmembrane segments (helical) span residues 3-23 (IVEI…EFAP), 48-68 (AANT…VVVF), 92-112 (MQVI…EDYI), 116-136 (LFST…MIAA), 152-172 (ITYK…WPGF), 193-213 (ADFT…LSLL), 220-240 (TIDA…FALI), and 252-272 (IRLV…YIVY).

Belongs to the UppP family.

It localises to the cell membrane. The enzyme catalyses di-trans,octa-cis-undecaprenyl diphosphate + H2O = di-trans,octa-cis-undecaprenyl phosphate + phosphate + H(+). Catalyzes the dephosphorylation of undecaprenyl diphosphate (UPP). Confers resistance to bacitracin. The protein is Undecaprenyl-diphosphatase of Geobacillus sp. (strain WCH70).